Here is a 1046-residue protein sequence, read N- to C-terminus: UDP-N-acetylglucosamine--peptide N-acetylglucosaminyltransferase 110 kDa subunit (1046 aa).

Ala-2 carries the N-acetylalanine modification. Residues Ser-3 and Ser-4 each carry the phosphoserine; by GSK3-beta; alternate modification. Ser-3 and Ser-4 each carry an O-linked (GlcNAc) serine; alternate glycan. At Ser-20 the chain carries Phosphoserine. 12 TPR repeats span residues 21-54 (FQGL…EPDN), 89-122 (AEAY…KPDF), 123-156 (IDGY…NPDL), 157-190 (YCVR…QPNF), 191-224 (AVAW…DPNF), 225-258 (LDAY…SPNH), 259-292 (AVVH…QPHF), 293-326 (PDAY…CPTH), 327-360 (ADSL…FPEF), 361-394 (AAAH…SPTF), 395-428 (ADAY…NPAF), and 429-462 (ADAH…KPDF). An O-linked (GlcNAc) serine; by autocatalysis glycan is attached at Ser-399. Position 454 is a phosphothreonine (Thr-454). One copy of the TPR 13; truncated repeat lies at 463–473 (PDAYCNLAHCL). Positions 464-466 (DAY) match the DFP motif motif. Positions 487–503 (KKLVSIVADQLEKNRLP) match the Nuclear localization signal motif. The Proton acceptor role is filled by His-508. UDP is bound by residues Gln-849, Lys-852, 906 to 908 (APK), 911 to 914 (HVRR), 930 to 932 (HTT), and Asp-935. Tyr-989 carries the phosphotyrosine modification. Residues 991–1010 (KKIRGKVWKQRISSPLFNTK) form a required for phosphatidylinositol 3,4,5-triphosphate binding region.

The protein belongs to the glycosyltransferase 41 family. O-GlcNAc transferase subfamily. In terms of assembly, monomer; may exist in different oligomerization states in cells. Homotrimer, oligomerizes via TPR repeats 6 and 7. Trimerization is not necessary for activity in vitro, however it increases affinity for UDP-GlcNAc. Component of a THAP1/THAP3-HCFC1-OGT complex. Component of the NSL complex at least composed of MOF/KAT8, KANSL1, KANSL2, KANSL3, MCRS1, PHF20, OGT1/OGT, WDR5 and HCFC1. Found in a complex with KIF5B, RHOT1, RHOT2 and TRAK1. Found in a complex composed of at least SINHCAF, SIN3A, HDAC1, SAP30, RBBP4, OGT and TET1. Component of a complex composed of KMT2E/MLL5, OGT and USP7; the complex stabilizes KMT2E/MLL5, preventing KMT2E/MLL5 ubiquitination and proteasomal-mediated degradation. Interacts (via TPRs 1-6) with SIN3A; the interaction mediates transcriptional repression in parallel with histone deacetylase. Interacts (via TPR 5-6) with TET1, TET2 and TET3. Interacts (via TPR repeats 6 and 7) with ATXN10. Interacts with NSD2. Interacts with PROSER1; this interaction mediates TET2 O-GlcNAcylation and stability by promoting the interaction between OGT and TET2. Ubiquitinated by the SCF(FBXO31) complex, leading to its proteasomal degradation. In terms of processing, phosphorylation on Ser-3 or Ser-4 by GSK3-beta positively regulates its activity. Phosphorylation at Thr-454 by AMPK promotes nuclear localization. Post-translationally, glycosylated via autocatalysis; O-GlcNAcylation at Ser-399 promotes nuclear localization.

The protein resides in the nucleus. The protein localises to the cytoplasm. The catalysed reaction is L-seryl-[protein] + UDP-N-acetyl-alpha-D-glucosamine = 3-O-(N-acetyl-beta-D-glucosaminyl)-L-seryl-[protein] + UDP + H(+). The enzyme catalyses L-threonyl-[protein] + UDP-N-acetyl-alpha-D-glucosamine = 3-O-(N-acetyl-beta-D-glucosaminyl)-L-threonyl-[protein] + UDP + H(+). The protein operates within protein modification; protein glycosylation. With respect to regulation, subject to product inhibition by UDP. Catalyzes the transfer of a single N-acetylglucosamine from UDP-GlcNAc to a serine or threonine residue in cytoplasmic and nuclear proteins resulting in their modification with a beta-linked N-acetylglucosamine (O-GlcNAc). Glycosylates a large and diverse number of proteins including histone H2B, AKT1, AMPK, ATG4B, CAPRIN1, EZH2, FNIP1, GSDMD, KRT7, LMNA, LMNB1, LMNB2, RPTOR, HOXA1, PFKL, KMT2E/MLL5, MAPT/TAU, TET2, RBL2, RET, NOD2 and HCFC1. Can regulate their cellular processes via cross-talk between glycosylation and phosphorylation or by affecting proteolytic processing. Involved in insulin resistance in muscle and adipocyte cells via glycosylating insulin signaling components and inhibiting the 'Thr-308' phosphorylation of AKT1, enhancing IRS1 phosphorylation and attenuating insulin signaling. Involved in glycolysis regulation by mediating glycosylation of 6-phosphofructokinase PFKL, inhibiting its activity. Plays a key role in chromatin structure by mediating O-GlcNAcylation of 'Ser-112' of histone H2B: recruited to CpG-rich transcription start sites of active genes via its interaction with TET proteins (TET1, TET2 or TET3). As part of the NSL complex indirectly involved in acetylation of nucleosomal histone H4 on several lysine residues. O-GlcNAcylation of 'Ser-75' of EZH2 increases its stability, and facilitating the formation of H3K27me3 by the PRC2/EED-EZH2 complex. Stabilizes KMT2E/MLL5 by mediating its glycosylation, thereby preventing KMT2E/MLL5 ubiquitination. Regulates circadian oscillation of the clock genes and glucose homeostasis in the liver. Stabilizes clock proteins BMAL1 and CLOCK through O-glycosylation, which prevents their ubiquitination and subsequent degradation. Promotes the CLOCK-BMAL1-mediated transcription of genes in the negative loop of the circadian clock such as PER1/2 and CRY1/2. O-glycosylates HCFC1 and regulates its proteolytic processing and transcriptional activity. Component of a THAP1/THAP3-HCFC1-OGT complex that is required for the regulation of the transcriptional activity of RRM1. Regulates mitochondrial motility in neurons by mediating glycosylation of TRAK1. Promotes autophagy by mediating O-glycosylation of ATG4B. Acts as a regulator of mTORC1 signaling by mediating O-glycosylation of RPTOR and FNIP1: O-GlcNAcylation of RPTOR in response to glucose sufficiency promotes activation of the mTORC1 complex. The polypeptide is UDP-N-acetylglucosamine--peptide N-acetylglucosaminyltransferase 110 kDa subunit (OGT) (Sus scrofa (Pig)).